A 259-amino-acid chain; its full sequence is 4-hydroxy-tetrahydrodipicolinate reductase (259 aa).

NAD(+)-binding positions include Gly9 to Met14 and Glu35. NADP(+) is bound at residue Arg36. Residues Gly92 to Thr94 and Ala116 to Met119 each bind NAD(+). Residue His149 is the Proton donor/acceptor of the active site. His150 is a binding site for (S)-2,3,4,5-tetrahydrodipicolinate. The Proton donor role is filled by Lys153. Residue Gly159–Thr160 participates in (S)-2,3,4,5-tetrahydrodipicolinate binding.

Belongs to the DapB family.

It is found in the cytoplasm. The enzyme catalyses (S)-2,3,4,5-tetrahydrodipicolinate + NAD(+) + H2O = (2S,4S)-4-hydroxy-2,3,4,5-tetrahydrodipicolinate + NADH + H(+). It catalyses the reaction (S)-2,3,4,5-tetrahydrodipicolinate + NADP(+) + H2O = (2S,4S)-4-hydroxy-2,3,4,5-tetrahydrodipicolinate + NADPH + H(+). It participates in amino-acid biosynthesis; L-lysine biosynthesis via DAP pathway; (S)-tetrahydrodipicolinate from L-aspartate: step 4/4. Its function is as follows. Catalyzes the conversion of 4-hydroxy-tetrahydrodipicolinate (HTPA) to tetrahydrodipicolinate. This chain is 4-hydroxy-tetrahydrodipicolinate reductase, found in Nitratidesulfovibrio vulgaris (strain DSM 19637 / Miyazaki F) (Desulfovibrio vulgaris).